The primary structure comprises 487 residues: RCC1 repeat-containing protein DDB_G0284033 (487 aa).

5 RCC1 repeats span residues 66-127 (SNKV…FSGY), 207-259 (RSLI…ALSN), 260-313 (DGKL…ALTS), 373-426 (NGNI…IVET), and 428-483 (DGRF…SLNS).

The sequence is that of RCC1 repeat-containing protein DDB_G0284033 from Dictyostelium discoideum (Social amoeba).